A 124-amino-acid polypeptide reads, in one-letter code: UPF0482 protein YPK_1977 (124 aa).

Positions 1–32 (MMKINNLPRLIRAFLPATLLMLPLVWQTPALA) are cleaved as a signal peptide. Residues 47–69 (GGNNDPMSKEQARQSQQQWDETN) are disordered.

Belongs to the UPF0482 family.

In Yersinia pseudotuberculosis serotype O:3 (strain YPIII), this protein is UPF0482 protein YPK_1977.